The sequence spans 131 residues: MAAQKVKKTRRRKERKNVEHGAAHIQSTFNNSIVTLTDAKGNALAWASAGGLGFKGSRKSTPFAAQMAAETAAKAAMEHGLKSVEVYVKGPGAGREAAIRSLQAAGLEVTLIKDVTPIPHNGCRPPKRRRV.

A compositionally biased stretch (basic residues) spans 1–15 (MAAQKVKKTRRRKER). The disordered stretch occupies residues 1–23 (MAAQKVKKTRRRKERKNVEHGAA).

It belongs to the universal ribosomal protein uS11 family. Part of the 30S ribosomal subunit. Interacts with proteins S7 and S18. Binds to IF-3.

Functionally, located on the platform of the 30S subunit, it bridges several disparate RNA helices of the 16S rRNA. Forms part of the Shine-Dalgarno cleft in the 70S ribosome. The polypeptide is Small ribosomal subunit protein uS11 (Clostridium perfringens (strain 13 / Type A)).